Consider the following 143-residue polypeptide: Transcriptional regulator MraZ (143 aa).

SpoVT-AbrB domains are found at residues 5 to 47 and 76 to 119; these read EYLH…PLDE and ATEC…SQAL.

This sequence belongs to the MraZ family. Forms oligomers.

The protein localises to the cytoplasm. Its subcellular location is the nucleoid. The polypeptide is Transcriptional regulator MraZ (Desulfitobacterium hafniense (strain DSM 10664 / DCB-2)).